A 424-amino-acid chain; its full sequence is MSNANPFFSQSLAERDASVRGAILKELERQQSQVELIASENIVSRAVLDAQGSVLTNKYAEGYPGKRYYGGCEFADEVEALAIERVKRLFNAGHANVQPHSGAQANGAVMLALAKPGDTVLGMSLDAGGHLTHGAKPALSGKWFNALQYGVSRDTMLLDYDQVEALAQQHKPSLIIAGFSAYPRKLDFARFRAIADSVGAKLMVDMAHIAGVIAAGRHANPVEHAHVVTSTTHKTLRGPRGGFVLTNDEEIAKKINSAVFPGLQGGPLMHVIAGKAVAFGEALTDDFKTYIDHVLANAQALGDVLKAGGVDLVTGGTDNHLLLVDLRPKGLKGAQVEQALERAGITCNKNGIPFDPEKPTITSGIRLGTPAGTTRGFGAAEFREVGRLILEVFEALRTNPEGDHATEQRVRREIFALCERFPIY.

(6S)-5,6,7,8-tetrahydrofolate contacts are provided by residues Leu125 and 129–131; that span reads GHL. Lys234 carries the post-translational modification N6-(pyridoxal phosphate)lysine. Glu250 is a (6S)-5,6,7,8-tetrahydrofolate binding site.

The protein belongs to the SHMT family. Homodimer. Pyridoxal 5'-phosphate is required as a cofactor.

The protein resides in the cytoplasm. It carries out the reaction (6R)-5,10-methylene-5,6,7,8-tetrahydrofolate + glycine + H2O = (6S)-5,6,7,8-tetrahydrofolate + L-serine. It participates in one-carbon metabolism; tetrahydrofolate interconversion. It functions in the pathway amino-acid biosynthesis; glycine biosynthesis; glycine from L-serine: step 1/1. Catalyzes the reversible interconversion of serine and glycine with tetrahydrofolate (THF) serving as the one-carbon carrier. This reaction serves as the major source of one-carbon groups required for the biosynthesis of purines, thymidylate, methionine, and other important biomolecules. Also exhibits THF-independent aldolase activity toward beta-hydroxyamino acids, producing glycine and aldehydes, via a retro-aldol mechanism. The polypeptide is Serine hydroxymethyltransferase 2 (Burkholderia mallei (strain ATCC 23344)).